The following is a 20-amino-acid chain: Pregnancy-associated glycoprotein 60H (20 aa).

N-linked (GlcNAc...) asparagine glycosylation occurs at Asn4.

The protein belongs to the peptidase A1 family. Chorionic epithelium (trophectoderm) and placental cotyledons.

It is found in the secreted. Its subcellular location is the extracellular space. This chain is Pregnancy-associated glycoprotein 60H, found in Bison bonasus (European bison).